Here is a 317-residue protein sequence, read N- to C-terminus: Protease 7 (317 aa).

The first 20 residues, 1–20, serve as a signal peptide directing secretion; it reads MRAKLLGIVLTTPIAISSFA. Residues 21 to 31 lie on the Periplasmic side of the membrane; sequence STETLSFTPDN. The beta stranded transmembrane segment at 32 to 41 threads the bilayer; sequence INADISLGTL. Residues 42-69 are Extracellular-facing; sequence SGKTKERVYLAEEGGRKVSQLDWKFNNA. The chain crosses the membrane as a beta stranded span at residues 70–78; the sequence is AIIKGAINW. At 79 to 83 the chain is on the periplasmic side; that stretch reads DLMPQ. The chain crosses the membrane as a beta stranded span at residues 84 to 92; sequence ISIGAAGWT. The Extracellular segment spans residues 93–130; that stretch reads TLGSRGGNMVDQDWMDSSNPGTWTDESRHPDTQLNYAN. Catalysis depends on residues D103 and D105. A beta stranded transmembrane segment spans residues 131–140; that stretch reads EFDLNIKGWL. At 141 to 145 the chain is on the periplasmic side; it reads LNEPN. The beta stranded transmembrane segment at 146 to 156 threads the bilayer; the sequence is YRLGLMAGYQE. Topologically, residues 157 to 197 are extracellular; the sequence is SRYSFTARGGSYIYSSEEGFRDDIGSFPNGERAIGYKQRFK. A beta stranded transmembrane segment spans residues 198 to 209; that stretch reads MPYIGLTGSYRY. Over 210 to 211 the chain is Periplasmic; the sequence is ED. The beta stranded transmembrane segment at 212 to 221 threads the bilayer; that stretch reads FELGGTFKYS. Over 222–250 the chain is Extracellular; the sequence is GWVEASDNDEHYDPGKRITYRSKVKDQNY. Catalysis depends on residues D230 and H232. The beta stranded transmembrane segment at 251–261 threads the bilayer; that stretch reads YSVSVNAGYYV. At 262-264 the chain is on the periplasmic side; that stretch reads TPN. A beta stranded membrane pass occupies residues 265 to 274; sequence AKVYVEGTWN. Over 275–306 the chain is Extracellular; it reads RVTNKKGNTSLYDHNDNTSDYSKNGAGIENYN. The beta stranded transmembrane segment at 307–316 threads the bilayer; sequence FITTAGLKYT. Position 317 (F317) is a topological domain, periplasmic.

It belongs to the peptidase A26 family. As to quaternary structure, homopentamer.

It is found in the cell outer membrane. It carries out the reaction Has a virtual requirement for Arg in the P1 position and a slightly less stringent preference for this residue in the P1' position, which can also contain Lys, Gly or Val.. Its activity is regulated as follows. Inhibited by zinc. Protease that can cleave T7 RNA polymerase, ferric enterobactin receptor protein (FEP), antimicrobial peptide protamine and other proteins. This protease has a specificity for paired basic residues. This is Protease 7 (ompT) from Escherichia coli O157:H7.